Consider the following 565-residue polypeptide: Sensor histidine kinase YpdA (565 aa).

The Cytoplasmic portion of the chain corresponds to 1–3 (MHE). A helical transmembrane segment spans residues 4-24 (IFNMLLAVFDRAALMLICLFF). Residues 25–45 (LIRIRLFRELLHKSAHSPKEL) lie on the Periplasmic side of the membrane. Residues 46 to 66 (LAVTAIFSLFALFSTWSGVPV) form a helical membrane-spanning segment. Residues 67 to 74 (EGSLVNVR) lie on the Cytoplasmic side of the membrane. Residues 75–95 (IIAVMSGGILFGPWVGIITGV) form a helical membrane-spanning segment. At 96 to 107 (IAGIHRYLIDIG) the chain is on the periplasmic side. The helical transmembrane segment at 108–128 (GVTAIPCFITSILAGCISGWI) threads the bilayer. Over 129–139 (NLKIPKAQRWR) the chain is Cytoplasmic. The helical transmembrane segment at 140–160 (VGILGGMLCETLTMILVIVWA) threads the bilayer. The Periplasmic segment spans residues 161 to 172 (PTTALGIDIVSK). The helical transmembrane segment at 173–193 (IGIPMILGSVCIGFIVLLVQS) threads the bilayer. The Cytoplasmic segment spans residues 194 to 565 (VEGEKEASAA…PVASQATLLL (372 aa)). The 120-residue stretch at 223–342 (VNSESLRKVC…AVGLSQIIST (120 aa)) folds into the GAF domain. In terms of domain architecture, Histidine kinase spans 343 to 554 (QLEVSRAEQL…EIAFYIPNQR (212 aa)). His371 is subject to Phosphohistidine; by autocatalysis.

Interacts with BtsT and YhjX. Post-translationally, autophosphorylated.

It is found in the cell inner membrane. The catalysed reaction is ATP + protein L-histidine = ADP + protein N-phospho-L-histidine.. Member of the two-component regulatory system YpdA/YpdB, which is part of a nutrient-sensing regulatory network composed of YpdA/YpdB, the high-affinity pyruvate signaling system BtsS/BtsR and their respective target proteins, YhjX and BtsT. YpdA activates YpdB by phosphorylation in response to high concentrations of extracellular pyruvate. Activation of the YpdA/YpdB signaling cascade also promotes BtsS/BtsR-mediated btsT expression. This is Sensor histidine kinase YpdA (ypdA) from Escherichia coli (strain K12).